Here is a 485-residue protein sequence, read N- to C-terminus: WD repeat-containing protein 13 (485 aa).

Met1 is subject to N-acetylmethionine. Phosphoserine occurs at positions 70, 74, and 79. Arg114 carries the asymmetric dimethylarginine; alternate modification. Arg114 is modified (omega-N-methylarginine; alternate). WD repeat units lie at residues 162–202, 208–246, 250–290, 295–335, 341–389, 394–438, and 444–482; these read GMYH…LCQL, TVLRVLRGHTRGVSDFAWSLSNDILVSTSLDATMRIWAS, RCIR…VMNI, KVKG…LFDM, TKAK…VVDN, QLKR…FFDV, and AAVNKLQGHSAPVLDVSFNCDESLLASSDASGMVIVWRR.

In terms of tissue distribution, widely expressed.

It localises to the nucleus. In Homo sapiens (Human), this protein is WD repeat-containing protein 13 (WDR13).